The primary structure comprises 225 residues: PKHD-type hydroxylase YbiX (225 aa).

The 100-residue stretch at 78–177 (TLSTPLFNRY…RVASFMWIQS (100 aa)) folds into the Fe2OG dioxygenase domain. Residues H96, D98, and H158 each coordinate Fe cation. R168 contributes to the 2-oxoglutarate binding site.

It depends on Fe(2+) as a cofactor. L-ascorbate serves as cofactor.

The protein is PKHD-type hydroxylase YbiX of Escherichia coli O7:K1 (strain IAI39 / ExPEC).